Reading from the N-terminus, the 122-residue chain is Basic phospholipase A2 LmTX-II (122 aa).

6 disulfides stabilise this stretch: C26-C115, C28-C44, C43-C95, C49-C122, C50-C88, and C75-C86. Positions 27, 29, and 31 each coordinate Ca(2+). The active site involves H47. D48 is a binding site for Ca(2+). The active site involves D89.

In terms of assembly, monomer. Requires Ca(2+) as cofactor. Expressed by the venom gland.

It is found in the secreted. The enzyme catalyses a 1,2-diacyl-sn-glycero-3-phosphocholine + H2O = a 1-acyl-sn-glycero-3-phosphocholine + a fatty acid + H(+). Snake venom phospholipase A2 (PLA2) that may display neurotoxic and myotoxic activities. May induce inflammatory edema by mechanisms involving mast cell activation and arachidonic acid metabolites. May increase plasma creatine kinase activity. PLA2 catalyzes the calcium-dependent hydrolysis of the 2-acyl groups in 3-sn-phosphoglycerides. This is Basic phospholipase A2 LmTX-II from Lachesis muta muta (Bushmaster).